A 208-amino-acid polypeptide reads, in one-letter code: Pyrrolidone-carboxylate peptidase (208 aa).

Active-site residues include Glu-79, Cys-142, and His-166.

It belongs to the peptidase C15 family. Homotetramer made of two disulfide-linked dimers.

Its subcellular location is the cytoplasm. It carries out the reaction Release of an N-terminal pyroglutamyl group from a polypeptide, the second amino acid generally not being Pro.. Its function is as follows. Removes 5-oxoproline from various penultimate amino acid residues except L-proline. The sequence is that of Pyrrolidone-carboxylate peptidase (pcp) from Pyrococcus furiosus (strain ATCC 43587 / DSM 3638 / JCM 8422 / Vc1).